A 493-amino-acid polypeptide reads, in one-letter code: Transmembrane protein 184 homolog DDB_G0284525 (493 aa).

The segment covering 1-10 has biased composition (polar residues); it reads MTQESSSSNH. Residues 1 to 25 are disordered; that stretch reads MTQESSSSNHYVDESSFDNNNNNNN. Transmembrane regions (helical) follow at residues 46-66, 87-107, 119-139, 180-200, 212-232, 254-274, and 293-313; these read VPAL…ATIL, IVRI…SLLL, DCYE…YGGG, YVLV…FGLY, FYNA…VVLF, IVVF…NFGW, and FLIC…FPYE. N-linked (GlcNAc...) asparagine glycosylation is found at asparagine 415 and asparagine 416.

Belongs to the TMEM184 family.

Its subcellular location is the cell membrane. Probable transporter. The protein is Transmembrane protein 184 homolog DDB_G0284525 (tmem184A) of Dictyostelium discoideum (Social amoeba).